A 229-amino-acid polypeptide reads, in one-letter code: Deoxyribose-phosphate aldolase (229 aa).

Asp-96 serves as the catalytic Proton donor/acceptor. Lys-166 (schiff-base intermediate with acetaldehyde) is an active-site residue. The active-site Proton donor/acceptor is the Lys-195.

Belongs to the DeoC/FbaB aldolase family. DeoC type 1 subfamily.

It localises to the cytoplasm. It catalyses the reaction 2-deoxy-D-ribose 5-phosphate = D-glyceraldehyde 3-phosphate + acetaldehyde. Its pathway is carbohydrate degradation; 2-deoxy-D-ribose 1-phosphate degradation; D-glyceraldehyde 3-phosphate and acetaldehyde from 2-deoxy-alpha-D-ribose 1-phosphate: step 2/2. In terms of biological role, catalyzes a reversible aldol reaction between acetaldehyde and D-glyceraldehyde 3-phosphate to generate 2-deoxy-D-ribose 5-phosphate. The sequence is that of Deoxyribose-phosphate aldolase from Micrococcus luteus (strain ATCC 4698 / DSM 20030 / JCM 1464 / CCM 169 / CCUG 5858 / IAM 1056 / NBRC 3333 / NCIMB 9278 / NCTC 2665 / VKM Ac-2230) (Micrococcus lysodeikticus).